The chain runs to 201 residues: MAALVEPLGLEREVSRAVELLERLQRSGELPPQKLQALQRVLQSRFCSAIREVYEQLYDTLDITGSAEIRAHATAKATVAAFTASEGHAHPRVVELPKTDEGLGFNIMGGKEQNSPIYISRVIPGGVADRHGGLKRGDQLLSVNGVSVEGEQHEKAVELLKAAQGSVKLVVRYTPRVLEEMEARFEKMRSARRRQQHQSYS.

Positions 1–13 match the Kinase interacting site motif; that stretch reads MAALVEPLGLERE. One can recognise an L27 domain in the interval 10-65; sequence LEREVSRAVELLERLQRSGELPPQKLQALQRVLQSRFCSAIREVYEQLYDTLDITG. The region spanning 93 to 175 is the PDZ domain; sequence VVELPKTDEG…SVKLVVRYTP (83 aa).

The protein belongs to the lin-7 family. Forms a complex with CASK and CASKIN1. Component of the brain-specific heterotrimeric complex (LIN-10-LIN-2-LIN-7 complex) composed of at least APBA1, CASK, and LIN7, which associates with the motor protein KIF17 to transport vesicles along microtubules. Forms a heterotrimeric complex composed of MMP5, LIN7B and PATJ; the N-terminal L27 domain of PALS1 interacts with the L27 domain of PATJ and the C-terminal L27 domain of PALS1 interacts with the L27 domain of LIN7B. Forms a heterotrimeric complex with DLG1 and CASK via their L27 domains. Interacts with DLG4 and GRIN2B as well as CDH1 and CTNNB1, the channels KCNJ12/Kir2.2, KCNJ4/Kir2.3 and probably KCNJ2/Kir2.1 and SLC6A12/BGT-1 via its PDZ domain. The association of LIN7A with cadherin and beta-catenin is calcium-dependent, occurs at synaptic junctions and requires the actin cytoskeleton. Interacts with EGFR, ERBB2, ERBB3 and ERBB4 with both PDZ and KID domains. Interacts with ASIC3. Interacts with TOPK. Interacts with RTKN. Associates with KIF17 via APBA1. Interacts with APBA1. Interacts with MPP7. Interacts with DLG2. Interacts with DLG3.

It localises to the cell membrane. Its subcellular location is the basolateral cell membrane. It is found in the cell junction. The protein localises to the postsynaptic density membrane. The protein resides in the tight junction. Plays a role in establishing and maintaining the asymmetric distribution of channels and receptors at the plasma membrane of polarized cells. Forms membrane-associated multiprotein complexes that may regulate delivery and recycling of proteins to the correct membrane domains. The tripartite complex composed of LIN7 (LIN7A, LIN7B or LIN7C), CASK and APBA1 associates with the motor protein KIF17 to transport vesicles containing N-methyl-D-aspartate (NMDA) receptor subunit NR2B along microtubules. This complex may have the potential to couple synaptic vesicle exocytosis to cell adhesion in brain. Ensures the proper localization of GRIN2B (subunit 2B of the NMDA receptor) to neuronal postsynaptic density and may function in localizing synaptic vesicles at synapses where it is recruited by beta-catenin and cadherin. Required to localize Kir2 channels, GABA transporter (SLC6A12) and EGFR/ERBB1, ERBB2, ERBB3 and ERBB4 to the basolateral membrane of epithelial cells. May increase the amplitude of ASIC3 acid-evoked currents by stabilizing the channel at the cell surface. In Bos taurus (Bovine), this protein is Protein lin-7 homolog B (LIN7B).